The primary structure comprises 247 residues: Protein GrpE (247 aa).

Disordered stretches follow at residues 1-64 (MNDE…QALD) and 214-247 (SMGPGPKDDGEETITEQSLEGDNTTDQQSSEKSD). 3 stretches are compositionally biased toward polar residues: residues 30–39 (DEPSLSNVAE), 49–63 (DVTSSDAKDSSSQAL), and 228–241 (TEQSLEGDNTTDQQ).

This sequence belongs to the GrpE family. In terms of assembly, homodimer.

It is found in the cytoplasm. Its function is as follows. Participates actively in the response to hyperosmotic and heat shock by preventing the aggregation of stress-denatured proteins, in association with DnaK and GrpE. It is the nucleotide exchange factor for DnaK and may function as a thermosensor. Unfolded proteins bind initially to DnaJ; upon interaction with the DnaJ-bound protein, DnaK hydrolyzes its bound ATP, resulting in the formation of a stable complex. GrpE releases ADP from DnaK; ATP binding to DnaK triggers the release of the substrate protein, thus completing the reaction cycle. Several rounds of ATP-dependent interactions between DnaJ, DnaK and GrpE are required for fully efficient folding. The polypeptide is Protein GrpE (Prochlorococcus marinus (strain MIT 9211)).